The sequence spans 250 residues: Small ribosomal subunit protein uS2 (250 aa).

Belongs to the universal ribosomal protein uS2 family.

The protein is Small ribosomal subunit protein uS2 of Polaromonas sp. (strain JS666 / ATCC BAA-500).